The primary structure comprises 486 residues: Patatin-like phospholipase domain-containing protein 2 (486 aa).

The Cytoplasmic segment spans residues 1–8 (MFPKETTW). The chain crosses the membrane as a helical span at residues 9-29 (NISFAGCGFLGVYHIGVASCL). Residues 10–179 (ISFAGCGFLG…SDNLPLYELK (170 aa)) form the PNPLA domain. A GXGXXG motif is present at residues 14–19 (GCGFLG). Over 30 to 42 (REHAPFLVANATH) the chain is Extracellular. An N-linked (GlcNAc...) asparagine glycan is attached at asparagine 39. Residues 43–63 (IYGASAGALTATALVTGACLG) traverse the membrane as a helical segment. The short motif at 45 to 49 (GASAG) is the GXSXG element. Serine 47 serves as the catalytic Nucleophile. The Cytoplasmic segment spans residues 64–137 (EAGANIIEVS…IITHFNSKEE (74 aa)). Lysine 92 is covalently cross-linked (Glycyl lysine isopeptide (Lys-Gly) (interchain with G-Cter in ubiquitin)). A helical transmembrane segment spans residues 138-158 (LIQANVCSTFIPVYCGLIPPS). Residues 159–334 (LQGVRYVDGG…TTLSNMLPVR (176 aa)) lie on the Extracellular side of the membrane. The active-site Proton acceptor is aspartate 166. Residues 166–168 (DGG) carry the DGA/G motif. A helical transmembrane segment spans residues 335-355 (LAMAMMVPYTLPLESAVSFTI). Over 356–486 (RLLEWLPDVP…PQHPPSSPPC (131 aa)) the chain is Cytoplasmic. At serine 377 the chain carries Phosphoserine; in vitro. Phosphoserine; by PKA is present on residues serine 399 and serine 409. Serine 433 is subject to Phosphoserine; in vitro.

As to quaternary structure, interacts with ABHD5; this association stimulates PNPLA2 triglyceride hydrolase activity. Interacts with SERPINF1; this interaction stimulates the phospholipase A2 activity of PNPLA2. Despite a colocalization in lipid droplets, it probably does not interact with PLIN. Interacts with PLIN5; prevents interaction with ABHD5. Interacts with FAF2. In terms of processing, phosphorylation at Ser-409 by PKA is increased during fasting and moderate intensity exercise, and moderately increases lipolytic activity. Ubiquitinated by PEX2 in response to reactive oxygen species (ROS), leading to its degradation. Ubiquitination is stimulated by LDAH.

The protein resides in the lipid droplet. It localises to the cell membrane. The protein localises to the cytoplasm. The enzyme catalyses a triacylglycerol + H2O = a diacylglycerol + a fatty acid + H(+). It catalyses the reaction a triacylglycerol + H2O = a 1,2-diacylglycerol + a fatty acid + H(+). The catalysed reaction is a triacylglycerol + H2O = a 1,3-diacylglycerol + a fatty acid + H(+). It carries out the reaction a triacyl-sn-glycerol + H2O = a 1,3-diacyl-sn-glycerol + a fatty acid + H(+). The enzyme catalyses a triacyl-sn-glycerol + H2O = a 2,3-diacyl-sn-glycerol + a fatty acid + H(+). It catalyses the reaction a 1-acylglycerol + a 1,3-diacylglycerol = a triacylglycerol + glycerol. The catalysed reaction is a 1-acylglycerol + a 1,2-diacylglycerol = a triacylglycerol + glycerol. It carries out the reaction 2 a 1-acylglycerol = a 1,2-diacylglycerol + glycerol. The enzyme catalyses a triacylglycerol + all-trans-retinol = an all-trans-retinyl ester + a diacylglycerol. It catalyses the reaction 1,2-di-(9Z-octadecenoyl)-glycerol + (9Z)-octadecenoate + H(+) = 1,2,3-tri-(9Z-octadecenoyl)-glycerol + H2O. The catalysed reaction is 1,2,3-tri-(9Z-octadecenoyl)-glycerol + H2O = 1,3-di-(9Z-octadecenoyl)-glycerol + (9Z)-octadecenoate + H(+). It carries out the reaction 1-(9Z-octadecenoyl)-glycerol + 1,3-di-(9Z-octadecenoyl)-glycerol = 1,2,3-tri-(9Z-octadecenoyl)-glycerol + glycerol. The enzyme catalyses 1-(9Z-octadecenoyl)-glycerol + 1,2-di-(9Z-octadecenoyl)-glycerol = 1,2,3-tri-(9Z-octadecenoyl)-glycerol + glycerol. It catalyses the reaction 2 1-(9Z-octadecenoyl)-glycerol = 1,2-di-(9Z-octadecenoyl)-glycerol + glycerol. The catalysed reaction is 1,2,3-tri-(9Z-octadecenoyl)-glycerol + all-trans-retinol = all-trans-retinyl 9Z-octadecenoate + di-(9Z)-octadecenoylglycerol. It carries out the reaction 1,2,3-tri-(9Z)-hexadecenoylglycerol + H2O = 1,3-di-(9Z)-hexadecenoylglycerol + (9Z)-hexadecenoate + H(+). The enzyme catalyses 1,2,3-tri-(9Z,12Z)-octadecadienoylglycerol + H2O = 1,3-di-(9Z,12Z)-octadecadienoylglycerol + (9Z,12Z)-octadecadienoate + H(+). It catalyses the reaction 1,2,3-tri-(9Z,12Z,15Z)-octadecatrienoylglycerol + H2O = 1,3-di-(9Z,12Z,15Z)-octadecatrienoylglycerol + (9Z,12Z,15Z)-octadecatrienoate + H(+). The catalysed reaction is 1,3-di-(9Z)-octadecenoyl-2-hexadecanoylglycerol + H2O = 1,3-di-(9Z-octadecenoyl)-glycerol + hexadecanoate + H(+). It carries out the reaction 1,2-di-(9Z)-octadecenoyl-3-hexadecanoyl-sn-glycerol + H2O = 1-(9Z)-octadecenoyl-3-hexadecanoyl-sn-glycerol + (9Z)-octadecenoate + H(+). The enzyme catalyses 1-hexadecanoyl-2,3-di-(9Z)-octadecenoyl-sn-glycerol + H2O = 1-hexadecanoyl-3-(9Z)-octadecenoyl-sn-glycerol + (9Z)-octadecenoate + H(+). It catalyses the reaction 1,2,3-tri-(9Z-octadecenoyl)-glycerol + H2O = 2,3-di-(9Z)-octadecenoyl-sn-glycerol + (9Z)-octadecenoate + H(+). The catalysed reaction is 1,2,3-tri-(9Z)-hexadecenoylglycerol + H2O = 2,3-di-(9Z)-hexadecenoyl-sn-glycerol + (9Z)-hexadecenoate + H(+). It carries out the reaction 1,2,3-tri-(9Z,12Z)-octadecadienoylglycerol + H2O = 2,3-di-(9Z,12Z)-octadecadienoyl-sn-glycerol + (9Z,12Z)-octadecadienoate + H(+). The enzyme catalyses 1,2,3-tri-(9Z,12Z,15Z)-octadecatrienoylglycerol + H2O = 2,3-di-(9Z,12Z,15Z)-octadecatrienoyl-sn-glycerol + (9Z,12Z,15Z)-octadecatrienoate + H(+). It catalyses the reaction 1,3-di-(9Z)-octadecenoyl-2-hexadecanoylglycerol + H2O = 2-hexadecanoyl-3-(9Z)-octadecenoyl-sn-glycerol + (9Z)-octadecenoate + H(+). The catalysed reaction is 1-hexadecanoyl-2,3-di-(9Z)-octadecenoyl-sn-glycerol + H2O = 2,3-di-(9Z)-octadecenoyl-sn-glycerol + hexadecanoate + H(+). It carries out the reaction 1,2-di-(9Z)-octadecenoyl-3-hexadecanoyl-sn-glycerol + H2O = 2-(9Z-octadecenoyl)-3-hexadecanoyl-sn-glycerol + (9Z)-octadecenoate + H(+). The enzyme catalyses a 1,2-diacyl-sn-glycero-3-phosphocholine + H2O = a 1-acyl-sn-glycero-3-phosphocholine + a fatty acid + H(+). It catalyses the reaction 1,2,3-tri-(9Z-octadecenoyl)-glycerol + 9-hydroxy-octadecanoate = 9-(9Z-octadecenoyloxy)-octadecanoate + 2,3-di-(9Z)-octadecenoyl-sn-glycerol. The catalysed reaction is 1-hexadecanoyl-2,3-di-(9Z)-octadecenoyl-sn-glycerol + 9-hydroxy-octadecanoate = 9-hexadecanoyloxy-octadecanoate + 2,3-di-(9Z)-octadecenoyl-sn-glycerol. It carries out the reaction 1,2,3-tri-(10Z)-heptadecenoylglycerol + 9-hydroxy-octadecanoate = 2,3-di-(10Z-heptadecenoyl)-sn-glycerol + 9-(10Z-heptadecenoyloxy)-octadecanoate. The enzyme catalyses 1,2,3-tri-(9Z,12Z)-octadecadienoylglycerol + 9-hydroxy-octadecanoate = 2,3-di-(9Z,12Z)-octadecadienoyl-sn-glycerol + 9-(9Z,12Z-octadecadienoyloxy)-octadecanoate. It catalyses the reaction 1,2,3-tri-(9Z)-hexadecenoylglycerol + 9-hydroxy-octadecanoate = 2,3-di-(9Z)-hexadecenoyl-sn-glycerol + 9-(9Z-hexadecenoyloxy)-octadecanoate. The catalysed reaction is 9-hydroxy-octadecanoate + 1,2-di-(9Z-octadecenoyl)-sn-glycerol = 9-(9Z-octadecenoyloxy)-octadecanoate + 2-(9Z-octadecenoyl)-glycerol. It carries out the reaction 1-hexadecanoyl-2,3-di-(9Z)-octadecenoyl-sn-glycerol + 9-hydroxy-octadecanoate = 1-hexadecanoyl-3-(9Z)-octadecenoyl-sn-glycerol + 9-(9Z-octadecenoyloxy)-octadecanoate. It functions in the pathway glycerolipid metabolism; triacylglycerol degradation. Functionally, catalyzes the initial step in triglyceride hydrolysis in adipocyte and non-adipocyte lipid droplets. Exhibits a strong preference for the hydrolysis of long-chain fatty acid esters at the sn-2 position of the glycerol backbone and acts coordinately with LIPE/HLS and DGAT2 within the lipolytic cascade. Also possesses acylglycerol transacylase and phospholipase A2 activities. Transfers fatty acid from triglyceride to retinol, hydrolyzes retinylesters, and generates 1,3-diacylglycerol from triglycerides. Regulates adiposome size and may be involved in the degradation of adiposomes. Catalyzes the formation of an ester bond between hydroxy fatty acids and fatty acids derived from triglycerides or diglycerides to generate fatty acid esters of hydroxy fatty acids (FAHFAs) in adipocytes. Acts antagonistically with LDAH in regulation of cellular lipid stores. Inhibits LDAH-stimulated lipid droplet fusion. May play an important role in energy homeostasis. May play a role in the response of the organism to starvation, enhancing hydrolysis of triglycerides and providing free fatty acids to other tissues to be oxidized in situations of energy depletion. This Bos taurus (Bovine) protein is Patatin-like phospholipase domain-containing protein 2 (PNPLA2).